Reading from the N-terminus, the 210-residue chain is ATP-dependent Clp protease proteolytic subunit 1 (210 aa).

Ser106 serves as the catalytic Nucleophile. Residue His131 is part of the active site.

This sequence belongs to the peptidase S14 family. As to quaternary structure, fourteen ClpP subunits assemble into 2 heptameric rings which stack back to back to give a disk-like structure with a central cavity, resembling the structure of eukaryotic proteasomes.

It localises to the cytoplasm. It catalyses the reaction Hydrolysis of proteins to small peptides in the presence of ATP and magnesium. alpha-casein is the usual test substrate. In the absence of ATP, only oligopeptides shorter than five residues are hydrolyzed (such as succinyl-Leu-Tyr-|-NHMec, and Leu-Tyr-Leu-|-Tyr-Trp, in which cleavage of the -Tyr-|-Leu- and -Tyr-|-Trp bonds also occurs).. Cleaves peptides in various proteins in a process that requires ATP hydrolysis. Has a chymotrypsin-like activity. Plays a major role in the degradation of misfolded proteins. This chain is ATP-dependent Clp protease proteolytic subunit 1, found in Chelativorans sp. (strain BNC1).